Consider the following 84-residue polypeptide: Large ribosomal subunit protein bL27 (84 aa).

Positions 1–22 are disordered; sequence MAHKKAGGSTRNGRDSESKRLG.

This sequence belongs to the bacterial ribosomal protein bL27 family.

In Shewanella pealeana (strain ATCC 700345 / ANG-SQ1), this protein is Large ribosomal subunit protein bL27.